We begin with the raw amino-acid sequence, 313 residues long: Porphobilinogen deaminase (313 aa).

At Cys-242 the chain carries S-(dipyrrolylmethanemethyl)cysteine.

The protein belongs to the HMBS family. As to quaternary structure, monomer. Requires dipyrromethane as cofactor.

The catalysed reaction is 4 porphobilinogen + H2O = hydroxymethylbilane + 4 NH4(+). It participates in porphyrin-containing compound metabolism; protoporphyrin-IX biosynthesis; coproporphyrinogen-III from 5-aminolevulinate: step 2/4. In terms of biological role, tetrapolymerization of the monopyrrole PBG into the hydroxymethylbilane pre-uroporphyrinogen in several discrete steps. This chain is Porphobilinogen deaminase (hemC), found in Proteus mirabilis.